The chain runs to 549 residues: CTP synthase (549 aa).

The segment at 1–266 (MSAKYIFVTG…DKLALRYLHL (266 aa)) is amidoligase domain. Ser14 contacts CTP. Ser14 lines the UTP pocket. ATP contacts are provided by residues 15–20 (SLGKGL) and Asp72. Mg(2+)-binding residues include Asp72 and Glu140. CTP contacts are provided by residues 147–149 (DIE), 187–192 (KTKPTQ), and Lys223. UTP is bound by residues 187–192 (KTKPTQ) and Lys223. Residue 239 to 241 (KDV) coordinates ATP. The Glutamine amidotransferase type-1 domain occupies 291 to 533 (SIGIVGKYVE…VKAAYQNHKP (243 aa)). Position 353 (Gly353) interacts with L-glutamine. Cys380 functions as the Nucleophile; for glutamine hydrolysis in the catalytic mechanism. Residues 381–384 (LGMQ), Glu404, and Arg461 each bind L-glutamine. Active-site residues include His506 and Glu508.

Belongs to the CTP synthase family. Homotetramer.

It carries out the reaction UTP + L-glutamine + ATP + H2O = CTP + L-glutamate + ADP + phosphate + 2 H(+). The catalysed reaction is L-glutamine + H2O = L-glutamate + NH4(+). It catalyses the reaction UTP + NH4(+) + ATP = CTP + ADP + phosphate + 2 H(+). Its pathway is pyrimidine metabolism; CTP biosynthesis via de novo pathway; CTP from UDP: step 2/2. With respect to regulation, allosterically activated by GTP, when glutamine is the substrate; GTP has no effect on the reaction when ammonia is the substrate. The allosteric effector GTP functions by stabilizing the protein conformation that binds the tetrahedral intermediate(s) formed during glutamine hydrolysis. Inhibited by the product CTP, via allosteric rather than competitive inhibition. Catalyzes the ATP-dependent amination of UTP to CTP with either L-glutamine or ammonia as the source of nitrogen. Regulates intracellular CTP levels through interactions with the four ribonucleotide triphosphates. This Acidobacterium capsulatum (strain ATCC 51196 / DSM 11244 / BCRC 80197 / JCM 7670 / NBRC 15755 / NCIMB 13165 / 161) protein is CTP synthase.